Reading from the N-terminus, the 348-residue chain is Methylthioribose-1-phosphate isomerase (348 aa).

Substrate-binding positions include 51–53 (RGA), Arg-94, and Gln-199. Asp-240 serves as the catalytic Proton donor. 250–251 (NK) provides a ligand contact to substrate.

This sequence belongs to the eIF-2B alpha/beta/delta subunits family. MtnA subfamily.

It carries out the reaction 5-(methylsulfanyl)-alpha-D-ribose 1-phosphate = 5-(methylsulfanyl)-D-ribulose 1-phosphate. It functions in the pathway amino-acid biosynthesis; L-methionine biosynthesis via salvage pathway; L-methionine from S-methyl-5-thio-alpha-D-ribose 1-phosphate: step 1/6. Its function is as follows. Catalyzes the interconversion of methylthioribose-1-phosphate (MTR-1-P) into methylthioribulose-1-phosphate (MTRu-1-P). The polypeptide is Methylthioribose-1-phosphate isomerase (Nitrosococcus oceani (strain ATCC 19707 / BCRC 17464 / JCM 30415 / NCIMB 11848 / C-107)).